Reading from the N-terminus, the 429-residue chain is Glutamate-1-semialdehyde 2,1-aminomutase (429 aa).

Lys265 is modified (N6-(pyridoxal phosphate)lysine).

The protein belongs to the class-III pyridoxal-phosphate-dependent aminotransferase family. HemL subfamily. In terms of assembly, homodimer. The cofactor is pyridoxal 5'-phosphate.

The protein resides in the cytoplasm. It carries out the reaction (S)-4-amino-5-oxopentanoate = 5-aminolevulinate. It participates in porphyrin-containing compound metabolism; protoporphyrin-IX biosynthesis; 5-aminolevulinate from L-glutamyl-tRNA(Glu): step 2/2. This is Glutamate-1-semialdehyde 2,1-aminomutase from Legionella pneumophila (strain Lens).